Reading from the N-terminus, the 464-residue chain is Glutamate--tRNA ligase (464 aa).

The 'HIGH' region signature appears at 9 to 19 (PSPTGYLHIGG). A 'KMSKS' region motif is present at residues 242 to 246 (KISKR). K245 lines the ATP pocket.

This sequence belongs to the class-I aminoacyl-tRNA synthetase family. Glutamate--tRNA ligase type 1 subfamily. As to quaternary structure, monomer.

It is found in the cytoplasm. The enzyme catalyses tRNA(Glu) + L-glutamate + ATP = L-glutamyl-tRNA(Glu) + AMP + diphosphate. Functionally, catalyzes the attachment of glutamate to tRNA(Glu) in a two-step reaction: glutamate is first activated by ATP to form Glu-AMP and then transferred to the acceptor end of tRNA(Glu). This Neisseria gonorrhoeae (strain NCCP11945) protein is Glutamate--tRNA ligase.